Reading from the N-terminus, the 518-residue chain is Crotonobetaine/carnitine--CoA ligase (518 aa).

The protein belongs to the ATP-dependent AMP-binding enzyme family.

The enzyme catalyses 4-(trimethylamino)butanoate + ATP + CoA = 4-(trimethylamino)butanoyl-CoA + AMP + diphosphate. The catalysed reaction is crotonobetaine + ATP + CoA = crotonobetainyl-CoA + AMP + diphosphate. It catalyses the reaction (R)-carnitine + ATP + CoA = (R)-carnitinyl-CoA + AMP + diphosphate. It participates in amine and polyamine metabolism; carnitine metabolism. Its function is as follows. Catalyzes the transfer of CoA to carnitine, generating the initial carnitinyl-CoA needed for the CaiB reaction cycle. Also has activity toward crotonobetaine and gamma-butyrobetaine. The sequence is that of Crotonobetaine/carnitine--CoA ligase from Proteus sp. (strain LE138).